We begin with the raw amino-acid sequence, 95 residues long: IgNAR transmembrane form NE (95 aa).

In terms of domain architecture, Ig-like spans 1 to 36 (LTFSTRSLLNLPAVEWKSGAKYTCTASHSPSQSTVK). Positions 24-35 (CTASHSPSQSTV) are enriched in polar residues. The tract at residues 24 to 79 (CTASHSPSQSTVKRVIRNPKESPKGSSETRKSPLEIMESPEDYGTEEDQLENVNED) is disordered. The segment covering 41 to 56 (NPKESPKGSSETRKSP) has biased composition (basic and acidic residues). Residues 61–77 (ESPEDYGTEEDQLENVN) are compositionally biased toward acidic residues. An N-linked (GlcNAc...) asparagine glycan is attached at asparagine 81.

As to expression, expressed mainly in lymphoid tissues including spleen, epigonal organ and circulating lymphocytes. Also expressed at low levels in the pancreas.

This is IgNAR transmembrane form NE from Ginglymostoma cirratum (Nurse shark).